Consider the following 455-residue polypeptide: NADH-quinone oxidoreductase subunit N (455 aa).

Transmembrane regions (helical) follow at residues 25 to 45 (AIVP…ISEY), 61 to 81 (FSVA…ALSH), 99 to 119 (VFLL…MFFL), 149 to 169 (FLMG…IYGA), 193 to 213 (IGIV…PFHF), 257 to 277 (IQII…IMAL), 285 to 305 (MFAF…LLTS), 312 to 332 (LYYA…VMYV), 355 to 375 (AGIL…SGFF), 391 to 411 (IVVF…FKII), and 432 to 452 (IVAV…NVVL).

It belongs to the complex I subunit 2 family. NDH-1 is composed of 14 different subunits. Subunits NuoA, H, J, K, L, M, N constitute the membrane sector of the complex.

It localises to the cell inner membrane. The enzyme catalyses a quinone + NADH + 5 H(+)(in) = a quinol + NAD(+) + 4 H(+)(out). NDH-1 shuttles electrons from NADH, via FMN and iron-sulfur (Fe-S) centers, to quinones in the respiratory chain. The immediate electron acceptor for the enzyme in this species is believed to be a menaquinone. Couples the redox reaction to proton translocation (for every two electrons transferred, four hydrogen ions are translocated across the cytoplasmic membrane), and thus conserves the redox energy in a proton gradient. This Flavobacterium psychrophilum (strain ATCC 49511 / DSM 21280 / CIP 103535 / JIP02/86) protein is NADH-quinone oxidoreductase subunit N.